We begin with the raw amino-acid sequence, 361 residues long: tRNA/tmRNA (uracil-C(5))-methyltransferase (361 aa).

Residues Gln185, Tyr213, Asn218, Glu234, and Asp294 each coordinate S-adenosyl-L-methionine. Cys319 serves as the catalytic Nucleophile. Glu353 serves as the catalytic Proton acceptor.

Belongs to the class I-like SAM-binding methyltransferase superfamily. RNA M5U methyltransferase family. TrmA subfamily.

It carries out the reaction uridine(54) in tRNA + S-adenosyl-L-methionine = 5-methyluridine(54) in tRNA + S-adenosyl-L-homocysteine + H(+). The enzyme catalyses uridine(341) in tmRNA + S-adenosyl-L-methionine = 5-methyluridine(341) in tmRNA + S-adenosyl-L-homocysteine + H(+). Dual-specificity methyltransferase that catalyzes the formation of 5-methyluridine at position 54 (m5U54) in all tRNAs, and that of position 341 (m5U341) in tmRNA (transfer-mRNA). This is tRNA/tmRNA (uracil-C(5))-methyltransferase from Pseudomonas putida (strain ATCC 700007 / DSM 6899 / JCM 31910 / BCRC 17059 / LMG 24140 / F1).